The primary structure comprises 426 residues: Tol-Pal system protein TolB (426 aa).

An N-terminal signal peptide occupies residues Met1–Ala25.

Belongs to the TolB family. As to quaternary structure, the Tol-Pal system is composed of five core proteins: the inner membrane proteins TolA, TolQ and TolR, the periplasmic protein TolB and the outer membrane protein Pal. They form a network linking the inner and outer membranes and the peptidoglycan layer.

It localises to the periplasm. In terms of biological role, part of the Tol-Pal system, which plays a role in outer membrane invagination during cell division and is important for maintaining outer membrane integrity. This Aromatoleum aromaticum (strain DSM 19018 / LMG 30748 / EbN1) (Azoarcus sp. (strain EbN1)) protein is Tol-Pal system protein TolB.